We begin with the raw amino-acid sequence, 360 residues long: Probable dual-specificity RNA methyltransferase RlmN (360 aa).

The Proton acceptor role is filled by E103. One can recognise a Radical SAM core domain in the interval 109–342 (HEYGNSVCVT…VTIRREQGHD (234 aa)). A disulfide bridge links C116 with C347. [4Fe-4S] cluster contacts are provided by C123, C127, and C130. S-adenosyl-L-methionine-binding positions include 173 to 174 (GE), S205, 228 to 230 (SLH), and N304. C347 serves as the catalytic S-methylcysteine intermediate.

Belongs to the radical SAM superfamily. RlmN family. Requires [4Fe-4S] cluster as cofactor.

Its subcellular location is the cytoplasm. It carries out the reaction adenosine(2503) in 23S rRNA + 2 reduced [2Fe-2S]-[ferredoxin] + 2 S-adenosyl-L-methionine = 2-methyladenosine(2503) in 23S rRNA + 5'-deoxyadenosine + L-methionine + 2 oxidized [2Fe-2S]-[ferredoxin] + S-adenosyl-L-homocysteine. The catalysed reaction is adenosine(37) in tRNA + 2 reduced [2Fe-2S]-[ferredoxin] + 2 S-adenosyl-L-methionine = 2-methyladenosine(37) in tRNA + 5'-deoxyadenosine + L-methionine + 2 oxidized [2Fe-2S]-[ferredoxin] + S-adenosyl-L-homocysteine. Specifically methylates position 2 of adenine 2503 in 23S rRNA and position 2 of adenine 37 in tRNAs. The protein is Probable dual-specificity RNA methyltransferase RlmN of Bacillus pumilus (strain SAFR-032).